The following is a 1475-amino-acid chain: Protein Shroom4 (1475 aa).

One can recognise a PDZ domain in the interval 10 to 92 (YVPVQLQGGA…ILKLIVRRRN (83 aa)). 2 disordered regions span residues 151 to 175 (EKSS…GHLL) and 202 to 321 (CALS…PPRS). Positions 249–258 (TSTSHASSYS) are enriched in polar residues. The segment covering 294–312 (EQHRASEPVDSLPQKEKPG) has biased composition (basic and acidic residues). A Phosphoserine modification is found at serine 412. 4 disordered regions span residues 432–523 (SKGM…PSAT), 542–577 (HTEA…NRRR), 610–644 (NEAV…SPGD), and 658–688 (SECL…GQSS). The segment covering 471–485 (QTRKERKTTPLDDKL) has biased composition (basic and acidic residues). Polar residues predominate over residues 513-523 (SDLTSQQPSAT). Positions 542-557 (HTEASEEGDNEPKECG) are enriched in basic and acidic residues. Positions 558–568 (RLGGRRSGGPR) are enriched in gly residues. Composition is skewed to low complexity over residues 624 to 635 (PLSASNASLLPS) and 658 to 667 (SECLSQASES). Serine 722 is subject to Phosphoserine. 2 stretches are compositionally biased toward polar residues: residues 727 to 738 (AQPQVALSTEAP) and 775 to 791 (KSLS…HNNK). 2 disordered regions span residues 727-753 (AQPQ…STPQ) and 772-791 (ESSK…HNNK). Serine 1010 carries the post-translational modification Phosphoserine. Disordered regions lie at residues 1022 to 1041 (SNKP…ASMP) and 1055 to 1185 (SLEP…QSLQ). A compositionally biased stretch (pro residues) spans 1090-1099 (FPPPRPPPPN). Positions 1110–1125 (QLQQQQQQQQQQQQQQ) are enriched in low complexity. The span at 1128–1145 (EEEEEKEQEEEGEKEEDL) shows a compositional bias: acidic residues. The segment covering 1149–1168 (YFSSELTGSCAPNTEEQPQS) has biased composition (polar residues). The region spanning 1190 to 1469 (FALHPSNFVP…QLKCLKESLH (280 aa)) is the ASD2 domain. Positions 1380–1470 (SESNQEKLVL…LKCLKESLHL (91 aa)) form a coiled coil.

It belongs to the shroom family. Interacts directly with F-actin. Detected in most adult tissues examined. Expressed in brain, lung, heart, liver, kidney, muscle and ovary. Expressed throughout the brain, with high expression in the brain stem and cerebellum and weaker expression in the hypothalamus, the hippocampus and the olfactory bulb. Expressed in wide range of cell types during development, including vascular endothelium and the polarized epithelium of the neural tube and kidney.

It is found in the cytoplasm. The protein resides in the cytoskeleton. Probable regulator of cytoskeletal architecture that plays an important role in development. May regulate cellular and cytoskeletal architecture by modulating the spatial distribution of myosin II. The sequence is that of Protein Shroom4 (Shroom4) from Mus musculus (Mouse).